Consider the following 754-residue polypeptide: LON peptidase N-terminal domain and RING finger protein 2 (754 aa).

2 TPR repeats span residues 23 to 58 (IAQR…QPDR) and 59 to 91 (GLCL…GALR). Residues 112–136 (PLSAENPGGEPEAPGEGGPAPEPRA) form a disordered region. Over residues 115 to 125 (AENPGGEPEAP) the composition is skewed to low complexity. TPR repeat units follow at residues 197–230 (LRRL…APDD), 231–264 (NSLL…EPLL), and 266–298 (KGHQ…NPEC). The segment at 398–439 (GLKRQFPDDVEDAPDLNAPGKIPKKDLSLQRSPNSETEESQG) is disordered. Residues 426 to 439 (LQRSPNSETEESQG) show a composition bias toward polar residues. The TPR 6 repeat unit spans residues 447 to 483 (FECALCMRLLFEPVTTPCGHTFCLKCLERCLDHAPHC). An RING-type zinc finger spans residues 449-487 (CALCMRLLFEPVTTPCGHTFCLKCLERCLDHAPHCPLCK). Residues 528–737 (MSELSNLTRD…AIRRILVIIT (210 aa)) enclose the Lon N-terminal domain.

The protein is LON peptidase N-terminal domain and RING finger protein 2 (LONRF2) of Homo sapiens (Human).